The following is a 176-amino-acid chain: MTRVRPEKQAVVEQLREWIDQSKGMVFFSFEGLTSKDMQAMRADMKRNGLTVKVVKNTLLELAVKEVGLNVDESLFRGTTALLFSNEDELAPFKLFVEQVKKYGVLQAKGGILEGRWISAKEVDAIAKLPGRQELYAQLVGVVSSPMRGLVTVLSGPYRNLVYVLQAIKEKKEKAA.

The protein belongs to the universal ribosomal protein uL10 family. As to quaternary structure, part of the ribosomal stalk of the 50S ribosomal subunit. The N-terminus interacts with L11 and the large rRNA to form the base of the stalk. The C-terminus forms an elongated spine to which L12 dimers bind in a sequential fashion forming a multimeric L10(L12)X complex.

In terms of biological role, forms part of the ribosomal stalk, playing a central role in the interaction of the ribosome with GTP-bound translation factors. The sequence is that of Large ribosomal subunit protein uL10 from Coprothermobacter proteolyticus (strain ATCC 35245 / DSM 5265 / OCM 4 / BT).